Reading from the N-terminus, the 25-residue chain is Caerin-1.10 (25 aa).

Leucine 25 is modified (leucine amide).

Belongs to the frog skin active peptide (FSAP) family. Caerin subfamily. In terms of tissue distribution, expressed by the skin dorsal glands.

It localises to the secreted. Antibacterial peptide with wide spectrum of activity. The sequence is that of Caerin-1.10 from Litoria rothii (Roth's tree frog).